The chain runs to 65 residues: Sec-independent protein translocase protein TatA (65 aa).

The helical transmembrane segment at Ile-9–Gly-29 threads the bilayer. Positions Arg-40–Glu-65 are disordered. A compositionally biased stretch (basic and acidic residues) spans Ser-43 to Glu-65.

It belongs to the TatA/E family. In terms of assembly, forms a complex with TatC.

It localises to the cell membrane. Its function is as follows. Part of the twin-arginine translocation (Tat) system that transports large folded proteins containing a characteristic twin-arginine motif in their signal peptide across membranes. TatA could form the protein-conducting channel of the Tat system. This is Sec-independent protein translocase protein TatA from Dehalococcoides mccartyi (strain ATCC BAA-2100 / JCM 16839 / KCTC 5957 / BAV1).